A 412-amino-acid chain; its full sequence is Probable tRNA sulfurtransferase (412 aa).

The interval 1-22 is disordered; that stretch reads MPDIFTDNTDKQDSDPSRQGFE. The region spanning 82–190 is the THUMP domain; it reads PRAAEAAADV…QNLAYVYLET (109 aa). ATP is bound by residues 208-209, Lys-292, Gly-314, and Gln-323; that span reads LM.

This sequence belongs to the ThiI family.

It localises to the cytoplasm. It catalyses the reaction [ThiI sulfur-carrier protein]-S-sulfanyl-L-cysteine + a uridine in tRNA + 2 reduced [2Fe-2S]-[ferredoxin] + ATP + H(+) = [ThiI sulfur-carrier protein]-L-cysteine + a 4-thiouridine in tRNA + 2 oxidized [2Fe-2S]-[ferredoxin] + AMP + diphosphate. The catalysed reaction is [ThiS sulfur-carrier protein]-C-terminal Gly-Gly-AMP + S-sulfanyl-L-cysteinyl-[cysteine desulfurase] + AH2 = [ThiS sulfur-carrier protein]-C-terminal-Gly-aminoethanethioate + L-cysteinyl-[cysteine desulfurase] + A + AMP + 2 H(+). It participates in cofactor biosynthesis; thiamine diphosphate biosynthesis. Functionally, catalyzes the ATP-dependent transfer of a sulfur to tRNA to produce 4-thiouridine in position 8 of tRNAs, which functions as a near-UV photosensor. Also catalyzes the transfer of sulfur to the sulfur carrier protein ThiS, forming ThiS-thiocarboxylate. This is a step in the synthesis of thiazole, in the thiamine biosynthesis pathway. The sulfur is donated as persulfide by IscS. This chain is Probable tRNA sulfurtransferase, found in Methanosarcina acetivorans (strain ATCC 35395 / DSM 2834 / JCM 12185 / C2A).